A 354-amino-acid chain; its full sequence is Guanine nucleotide-binding protein G(i) subunit alpha-1 (354 aa).

Residue Gly-2 is the site of N-myristoyl glycine attachment. A lipid anchor (S-palmitoyl cysteine) is attached at Cys-3. The region spanning 32 to 354 is the G-alpha domain; sequence REVKLLLLGA…KNNLKDCGLF (323 aa). Residues 35–48 are G1 motif; it reads KLLLLGAGESGKST. Residues 43–48, 150–151, and 175–178 each bind GTP; these read ESGKST, DS, and LRTR. Position 47 (Ser-47) interacts with Mg(2+). A G2 motif region spans residues 173-181; the sequence is DVLRTRVKT. Thr-181 contacts Mg(2+). Positions 196-205 are G3 motif; that stretch reads FKMFDVGGQR. Residues 200-204, 269-272, and Ala-326 each bind GTP; these read DVGGQ and NKKD. Residues 265-272 are G4 motif; it reads ILFLNKKD. The interval 324 to 329 is G5 motif; sequence TCATDT.

Belongs to the G-alpha family. G(i/o/t/z) subfamily. Heterotrimeric G proteins are composed of 3 units; alpha, beta and gamma. The alpha chain contains the guanine nucleotide binding site. Part of a spindle orientation complex. Identified in complex with the beta subunit GNB1 and the gamma subunit GNG1. Identified in complex with the beta subunit GNB1 and the gamma subunit GNG2. GTP binding causes dissociation of the heterotrimer, liberating the individual subunits so that they can interact with downstream effector proteins. Myristoylation at Gly-2 is required for membrane anchoring before palmitoylation. Post-translationally, palmitoylation at Cys-3 varies with membrane lipid composition.

It is found in the nucleus. The protein localises to the cytoplasm. The protein resides in the cell membrane. Its subcellular location is the cytoskeleton. It localises to the microtubule organizing center. It is found in the centrosome. The protein localises to the cell cortex. The protein resides in the membrane. It catalyses the reaction GTP + H2O = GDP + phosphate + H(+). In terms of biological role, guanine nucleotide-binding proteins (G proteins) function as transducers downstream of G protein-coupled receptors (GPCRs) in numerous signaling cascades. The alpha chain contains the guanine nucleotide binding site and alternates between an active, GTP-bound state and an inactive, GDP-bound state. Signaling by an activated GPCR promotes GDP release and GTP binding. The alpha subunit has a low GTPase activity that converts bound GTP to GDP, thereby terminating the signal. Both GDP release and GTP hydrolysis are modulated by numerous regulatory proteins. Signaling is mediated via effector proteins, such as adenylate cyclase. Inhibits adenylate cyclase activity of ADCY1, ADCY5 and ADCY6, leading to decreased intracellular cAMP levels. Required for cortical dynein-dynactin complex recruitment during metaphase. The chain is Guanine nucleotide-binding protein G(i) subunit alpha-1 (GNAI1) from Gallus gallus (Chicken).